Consider the following 371-residue polypeptide: GDP-mannose transporter (371 aa).

Topologically, residues 1 to 51 are cytoplasmic; it reads MGVISFYLIGQLLYLIRKKYTTTYRQQQQHQYNMDSKHSTSSSSSGSLATR. Residues 52–72 form a helical membrane-spanning segment; that stretch reads ISNSGPISIAAYCLSSILMTV. The Lumenal portion of the chain corresponds to 73–80; it reads TNKYVLSG. Residues 81–101 traverse the membrane as a helical segment; it reads FSFNLNFFLLAVQSIVCIVTI. Residues 102–121 lie on the Cytoplasmic side of the membrane; sequence GSLKSLNIITYRQFNKDEAK. Residues 122-138 traverse the membrane as a helical segment; sequence KWSPIAFLLVAMIYTSS. The Lumenal segment spans residues 139–145; sequence KALQYLS. Residues 146–162 traverse the membrane as a helical segment; sequence IPVYTIFKNLTIILIAY. The Cytoplasmic segment spans residues 163–171; it reads GEVIWFGGK. Residues 172–192 traverse the membrane as a helical segment; the sequence is VTTMALSSFLLMVLSSVIAYY. Over 193–206 the chain is Lumenal; sequence GDNAAVKSHDDAFA. Residues 207–227 traverse the membrane as a helical segment; that stretch reads LYLGYFWMLTNCFASAAFVLI. The Cytoplasmic portion of the chain corresponds to 228 to 241; the sequence is MRKRIKLTNFKDFD. The chain crosses the membrane as a helical span at residues 242 to 262; sequence TMYYNNLLSIPILLICSFIFE. The Lumenal portion of the chain corresponds to 263-281; the sequence is DWSSANVSLNFPADNRVTT. Asparagine 268 carries an N-linked (GlcNAc...) asparagine glycan. A helical membrane pass occupies residues 282 to 302; the sequence is ITAMILSGASSVGISYCSAWC. Over 303-309 the chain is Cytoplasmic; that stretch reads VRVTSST. The chain crosses the membrane as a helical span at residues 310–329; that stretch reads TYSMVGALNKLPIALSGLIF. The Lumenal portion of the chain corresponds to 330–332; sequence FEA. A helical membrane pass occupies residues 333–355; it reads AVNFWSVSSIFVGFGAGLVYAVA. Topologically, residues 356–371 are cytoplasmic; it reads KQKQQKEQSQQLPTTK.

The protein belongs to the TPT transporter family. SLC35D subfamily. In terms of assembly, homooligomer.

Its subcellular location is the golgi apparatus membrane. The protein localises to the cytoplasmic vesicle membrane. It localises to the endoplasmic reticulum membrane. Its function is as follows. Involved in the import of GDP-mannose from the cytoplasm into the Golgi lumen. Involved in hyphal formation. The protein is GDP-mannose transporter (VRG4) of Candida albicans (strain SC5314 / ATCC MYA-2876) (Yeast).